We begin with the raw amino-acid sequence, 800 residues long: Ent-copalyl diphosphate synthase 2, chloroplastic (800 aa).

The transit peptide at 1–47 directs the protein to the chloroplast; sequence MQMQVLTAASSLPRATLLRPAAAEPWRQSFLQLQARPIQRPGIMLHC. The segment at 52–80 is disordered; that stretch reads QGQETRERRQLDDDEHARPPQGGDDDVAA. A compositionally biased stretch (basic and acidic residues) spans 55 to 69; sequence ETRERRQLDDDEHAR. Substrate is bound at residue lysine 242. Aspartate 374 and aspartate 376 together coordinate Mg(2+). The DXDD motif motif lies at 374 to 377; that stretch reads DIDD. Residue lysine 461 coordinates substrate.

Belongs to the terpene synthase family. Mg(2+) is required as a cofactor.

It is found in the plastid. Its subcellular location is the chloroplast. It catalyses the reaction (2E,6E,10E)-geranylgeranyl diphosphate = ent-copalyl diphosphate. Its pathway is secondary metabolite biosynthesis; terpenoid biosynthesis. In terms of biological role, catalyzes the conversion of geranylgeranyl diphosphate to the phytoalexin precursor ent-copalyl diphosphate. The sequence is that of Ent-copalyl diphosphate synthase 2, chloroplastic from Oryza sativa subsp. japonica (Rice).